A 251-amino-acid chain; its full sequence is Sugar fermentation stimulation protein homolog (251 aa).

It belongs to the SfsA family.

This is Sugar fermentation stimulation protein homolog from Prochlorococcus marinus (strain SARG / CCMP1375 / SS120).